Reading from the N-terminus, the 233-residue chain is tRNA (guanine-N(7)-)-methyltransferase (233 aa).

4 residues coordinate S-adenosyl-L-methionine: glutamate 65, glutamate 90, aspartate 117, and aspartate 139. Aspartate 139 is an active-site residue. Substrate is bound by residues lysine 143, aspartate 175, and threonine 212–glutamate 215.

This sequence belongs to the class I-like SAM-binding methyltransferase superfamily. TrmB family.

It carries out the reaction guanosine(46) in tRNA + S-adenosyl-L-methionine = N(7)-methylguanosine(46) in tRNA + S-adenosyl-L-homocysteine. It participates in tRNA modification; N(7)-methylguanine-tRNA biosynthesis. Functionally, catalyzes the formation of N(7)-methylguanine at position 46 (m7G46) in tRNA. The protein is tRNA (guanine-N(7)-)-methyltransferase of Roseobacter denitrificans (strain ATCC 33942 / OCh 114) (Erythrobacter sp. (strain OCh 114)).